Here is a 151-residue protein sequence, read N- to C-terminus: Large ribosomal subunit protein bL9 (151 aa).

The protein belongs to the bacterial ribosomal protein bL9 family.

Functionally, binds to the 23S rRNA. The sequence is that of Large ribosomal subunit protein bL9 from Prochlorococcus marinus (strain MIT 9515).